Reading from the N-terminus, the 293-residue chain is Ribosomal protein L11 methyltransferase (293 aa).

Positions 145, 166, 188, and 230 each coordinate S-adenosyl-L-methionine.

It belongs to the methyltransferase superfamily. PrmA family.

It is found in the cytoplasm. The catalysed reaction is L-lysyl-[protein] + 3 S-adenosyl-L-methionine = N(6),N(6),N(6)-trimethyl-L-lysyl-[protein] + 3 S-adenosyl-L-homocysteine + 3 H(+). Methylates ribosomal protein L11. This is Ribosomal protein L11 methyltransferase from Serratia proteamaculans (strain 568).